A 124-amino-acid polypeptide reads, in one-letter code: Ribonuclease pancreatic (124 aa).

The span at 1–13 (KETSAQKFERQHM) shows a compositional bias: basic and acidic residues. The interval 1–25 (KETSAQKFERQHMDSTGSSSSSPTY) is disordered. Substrate is bound by residues K7 and R10. Residue H12 is the Proton acceptor of the active site. 4 disulfides stabilise this stretch: C26–C84, C40–C95, C58–C110, and C65–C72. Substrate-binding positions include 41–45 (KPVNT), K66, and R85. H119 acts as the Proton donor in catalysis.

This sequence belongs to the pancreatic ribonuclease family. As to quaternary structure, monomer. Interacts with and forms tight 1:1 complexes with RNH1. Dimerization of two such complexes may occur. Interaction with RNH1 inhibits this protein. In terms of tissue distribution, pancreas.

Its subcellular location is the secreted. The catalysed reaction is an [RNA] containing cytidine + H2O = an [RNA]-3'-cytidine-3'-phosphate + a 5'-hydroxy-ribonucleotide-3'-[RNA].. It carries out the reaction an [RNA] containing uridine + H2O = an [RNA]-3'-uridine-3'-phosphate + a 5'-hydroxy-ribonucleotide-3'-[RNA].. In terms of biological role, endonuclease that catalyzes the cleavage of RNA on the 3' side of pyrimidine nucleotides. Acts on single-stranded and double-stranded RNA. The protein is Ribonuclease pancreatic (RNASE1) of Ondatra zibethicus (Muskrat).